Reading from the N-terminus, the 383-residue chain is 8-amino-7-oxononanoate synthase (383 aa).

Substrate is bound by residues arginine 27 and arginine 34. Residue glycine 114 to tyrosine 115 coordinates pyridoxal 5'-phosphate. Residue histidine 139 coordinates substrate. Pyridoxal 5'-phosphate is bound by residues serine 187, aspartate 212 to histidine 215, and threonine 232 to lysine 235. N6-(pyridoxal phosphate)lysine is present on lysine 235. Threonine 344 is a substrate binding site.

The protein belongs to the class-II pyridoxal-phosphate-dependent aminotransferase family. BioF subfamily. Homodimer. The cofactor is pyridoxal 5'-phosphate.

The enzyme catalyses 6-carboxyhexanoyl-[ACP] + L-alanine + H(+) = (8S)-8-amino-7-oxononanoate + holo-[ACP] + CO2. It participates in cofactor biosynthesis; biotin biosynthesis. Catalyzes the decarboxylative condensation of pimeloyl-[acyl-carrier protein] and L-alanine to produce 8-amino-7-oxononanoate (AON), [acyl-carrier protein], and carbon dioxide. The sequence is that of 8-amino-7-oxononanoate synthase from Methylorubrum extorquens (strain CM4 / NCIMB 13688) (Methylobacterium extorquens).